Reading from the N-terminus, the 406-residue chain is Tyrosine--tRNA ligase (406 aa).

Y35 is a binding site for L-tyrosine. The 'HIGH' region motif lies at 40–49 (PTADSLHIGH). 2 residues coordinate L-tyrosine: Y168 and Q172. The 'KMSKS' region motif lies at 228–232 (KMGKT). K231 lines the ATP pocket. Positions 340 to 406 (CSVVELLVDI…KKNYNRIIIK (67 aa)) constitute an S4 RNA-binding domain.

This sequence belongs to the class-I aminoacyl-tRNA synthetase family. TyrS type 1 subfamily. Homodimer.

The protein resides in the cytoplasm. It carries out the reaction tRNA(Tyr) + L-tyrosine + ATP = L-tyrosyl-tRNA(Tyr) + AMP + diphosphate + H(+). Functionally, catalyzes the attachment of tyrosine to tRNA(Tyr) in a two-step reaction: tyrosine is first activated by ATP to form Tyr-AMP and then transferred to the acceptor end of tRNA(Tyr). This chain is Tyrosine--tRNA ligase, found in Clostridium kluyveri (strain NBRC 12016).